A 413-amino-acid chain; its full sequence is NAD-dependent dihydropyrimidine dehydrogenase subunit PreT homolog (413 aa).

Glu-287 contributes to the NAD(+) binding site.

This sequence belongs to the NADH dehydrogenase family. In terms of assembly, heterotetramer of 2 PreA and 2 PreT subunits.

It carries out the reaction 5,6-dihydrouracil + NAD(+) = uracil + NADH + H(+). The enzyme catalyses 5,6-dihydrothymine + NAD(+) = thymine + NADH + H(+). Functionally, involved in pyrimidine base degradation. Catalyzes physiologically the reduction of uracil to 5,6-dihydrouracil (DHU) by using NADH as a specific cosubstrate. It also catalyzes the reverse reaction and the reduction of thymine to 5,6-dihydrothymine (DHT). This is NAD-dependent dihydropyrimidine dehydrogenase subunit PreT homolog (preT) from Salmonella typhi.